The primary structure comprises 142 residues: MGAKKVDLKRLAAALPDYPFAYLITVDDGHRVHTVAVEPVLRELPDGPDGPRAVVDVGLIGGRTRQNLAHRSEVTLLWPPSDPSGYSLIVDGRAQASDAGPDDDTARCGVVPIRALLHRDAAPDSPTAAKGCLHDCVVFSVP.

This is an uncharacterized protein from Mycobacterium tuberculosis (strain CDC 1551 / Oshkosh).